The sequence spans 201 residues: Large ribosomal subunit protein uL4 (201 aa).

A disordered region spans residues 44–71; the sequence is RAQKTRAEVSGSGKKPWRQKGTGRARSG.

This sequence belongs to the universal ribosomal protein uL4 family. As to quaternary structure, part of the 50S ribosomal subunit.

Functionally, one of the primary rRNA binding proteins, this protein initially binds near the 5'-end of the 23S rRNA. It is important during the early stages of 50S assembly. It makes multiple contacts with different domains of the 23S rRNA in the assembled 50S subunit and ribosome. Its function is as follows. Forms part of the polypeptide exit tunnel. This Proteus mirabilis (strain HI4320) protein is Large ribosomal subunit protein uL4.